Here is a 211-residue protein sequence, read N- to C-terminus: Large ribosomal subunit protein uL4 (211 aa).

The tract at residues 48-89 (KRAGTASTKTRVEVRGGGAKPWRQKGTGRARAGSRTSPLWRG) is disordered.

This sequence belongs to the universal ribosomal protein uL4 family. As to quaternary structure, part of the 50S ribosomal subunit.

Its function is as follows. One of the primary rRNA binding proteins, this protein initially binds near the 5'-end of the 23S rRNA. It is important during the early stages of 50S assembly. It makes multiple contacts with different domains of the 23S rRNA in the assembled 50S subunit and ribosome. Forms part of the polypeptide exit tunnel. In Desulfotalea psychrophila (strain LSv54 / DSM 12343), this protein is Large ribosomal subunit protein uL4.